We begin with the raw amino-acid sequence, 247 residues long: 14-3-3 protein gamma (247 aa).

M1 carries the post-translational modification N-acetylmethionine. The residue at position 2 (V2) is an N-acetylvaline; in 14-3-3 protein gamma, N-terminally processed. Residues 2-247 (VDREQLVQKA…QDDDGGEGNN (246 aa)) form an interaction with SPATA18/MIEAP region. S71 is modified (phosphoserine). Y133 is subject to Phosphotyrosine. T145 carries the phosphothreonine modification. Phosphoserine is present on S215. Position 234 is a phosphothreonine (T234). S235 carries the phosphoserine modification.

The protein belongs to the 14-3-3 family. As to quaternary structure, homodimer. Part of a complex that contains DSG3, PKP1, YAP1 and YWHAG; the complex is required for localization of DSG3 and YAP1 to the cell membrane in keratinocytes. Interacts with SAMSN1. Interacts with RAF1, SSH1 and CRTC2/TORC2. Interacts with ABL1 (phosphorylated form); the interaction retains it in the cytoplasm. Interacts with GAB2. Interacts with MDM4 (phosphorylated); negatively regulates MDM4 activity toward TP53. Interacts with PKA-phosphorylated AANAT and SIRT2. Interacts with the 'Thr-369' phosphorylated form of DAPK2. Interacts with PI4KB, TBC1D22A and TBC1D22B. Interacts with SLITRK1. Interacts with LRRK2; this interaction is dependent on LRRK2 phosphorylation. Interacts with MARK2 and MARK3. Interacts with MEFV. Interacts with ENDOG, TSC2 and PIK3C3; interaction with ENDOG weakens its interaction with TSC2 and PIK3C3. Interacts with (phosphorylated) WDR24. Interacts with BEST1; this interaction promotes L-glutamate channel activity leading to the positive regulation of NMDA glutamate receptor activity through the L-glutamate secretion. Interacts with PKP1 (when phosphorylated); the interaction results in translocation of PKP1 to the cytoplasm and loss of intercellular adhesion in keratinocytes. Interacts with SPATA18/MIEAP; a protein that also plays a role in MALM. Phosphorylated by various PKC isozymes.

It localises to the cytoplasm. Its subcellular location is the cytosol. It is found in the mitochondrion matrix. Adapter protein implicated in the regulation of a large spectrum of both general and specialized signaling pathways. Binds to a large number of partners, usually by recognition of a phosphoserine or phosphothreonine motif. Binding generally results in the modulation of the activity of the binding partner. Promotes inactivation of WDR24 component of the GATOR2 complex by binding to phosphorylated WDR24. Participates in the positive regulation of NMDA glutamate receptor activity by promoting the L-glutamate secretion through interaction with BEST1. Reduces keratinocyte intercellular adhesion, via interacting with PKP1 and sequestering it in the cytoplasm, thereby reducing its incorporation into desmosomes. Plays a role in mitochondrial protein catabolic process (also named MALM) that promotes the degradation of damaged proteins inside mitochondria. This is 14-3-3 protein gamma from Bos taurus (Bovine).